The chain runs to 296 residues: Probable endonuclease 4 (296 aa).

9 residues coordinate Zn(2+): histidine 68, histidine 109, glutamate 144, aspartate 178, histidine 181, histidine 213, aspartate 226, histidine 228, and glutamate 258.

It belongs to the AP endonuclease 2 family. Requires Zn(2+) as cofactor.

The catalysed reaction is Endonucleolytic cleavage to 5'-phosphooligonucleotide end-products.. Endonuclease IV plays a role in DNA repair. It cleaves phosphodiester bonds at apurinic or apyrimidinic (AP) sites, generating a 3'-hydroxyl group and a 5'-terminal sugar phosphate. In Staphylococcus saprophyticus subsp. saprophyticus (strain ATCC 15305 / DSM 20229 / NCIMB 8711 / NCTC 7292 / S-41), this protein is Probable endonuclease 4.